We begin with the raw amino-acid sequence, 305 residues long: Putative ABC transporter molybdenum-binding protein HVO_B0369 (305 aa).

Positions 1-40 (MNPDSAAGRSSRRAFLAAVGGVAAGGLTATAGCLGRGEEA) form a signal peptide, tat-type signal.

It belongs to the bacterial solute-binding protein 1 family. WtpA subfamily. In terms of assembly, the complex is composed of two ATP-binding proteins, two transmembrane proteins (HVO_B0370) and a solute-binding protein (HVO_B0369). Predicted to be exported by the Tat system. The position of the signal peptide cleavage has not been experimentally proven.

Its function is as follows. Part of an ABC transporter complex involved in molybdenum import. This Haloferax volcanii (strain ATCC 29605 / DSM 3757 / JCM 8879 / NBRC 14742 / NCIMB 2012 / VKM B-1768 / DS2) (Halobacterium volcanii) protein is Putative ABC transporter molybdenum-binding protein HVO_B0369.